A 122-amino-acid polypeptide reads, in one-letter code: Probable glycine cleavage system H protein (122 aa).

The Lipoyl-binding domain maps to I23–K104. K64 carries the N6-lipoyllysine modification.

It belongs to the GcvH family. As to quaternary structure, the glycine cleavage system is composed of four proteins: P, T, L and H. It depends on (R)-lipoate as a cofactor.

Functionally, the glycine cleavage system catalyzes the degradation of glycine. The H protein shuttles the methylamine group of glycine from the P protein to the T protein. The sequence is that of Probable glycine cleavage system H protein from Thermoplasma volcanium (strain ATCC 51530 / DSM 4299 / JCM 9571 / NBRC 15438 / GSS1).